A 210-amino-acid chain; its full sequence is Glutathione S-transferase P (210 aa).

The GST N-terminal domain maps to 2–81 (PPYTVVYFPV…HLGRTLGLYG (80 aa)). Residue Tyr-4 is modified to Phosphotyrosine; by EGFR. Residues Tyr-8, Arg-14, Trp-39, Lys-45, and 52–53 (QL) each bind glutathione. Thr-62 carries the post-translational modification Phosphothreonine. 65–66 (QS) contributes to the glutathione binding site. The GST C-terminal domain occupies 83 to 204 (DQQEAALVDM…ASPEYVNLPI (122 aa)). Residues Lys-103 and Lys-116 each carry the N6-succinyllysine modification. The residue at position 128 (Lys-128) is an N6-acetyllysine. At Tyr-199 the chain carries Phosphotyrosine; by EGFR.

Belongs to the GST superfamily. Pi family. Homodimer. Interacts with CDK5.

Its subcellular location is the cytoplasm. It is found in the mitochondrion. It localises to the nucleus. It catalyses the reaction RX + glutathione = an S-substituted glutathione + a halide anion + H(+). The enzyme catalyses prostaglandin J2 + glutathione = prostaglandin J2-S-(R)-glutathione. It carries out the reaction prostaglandin J2 + glutathione = prostaglandin J2-S-(S)-glutathione. The catalysed reaction is prostaglandin A2 + glutathione = prostaglandin A2-S-(S)-glutathione. It catalyses the reaction 11(S)-hydroxy-14(S),15(S)-epoxy-(5Z,8Z,12E)-eicosatrienoate + glutathione = (11S,15S)-dihydroxy-14(R)-S-glutathionyl-(5Z,8Z,12E)-eicosatrienoate. In terms of biological role, conjugation of reduced glutathione to a wide number of exogenous and endogenous hydrophobic electrophiles. Involved in the formation of glutathione conjugates of both prostaglandin A2 (PGA2) and prostaglandin J2 (PGJ2). Participates in the formation of novel hepoxilin regioisomers. Negatively regulates CDK5 activity via p25/p35 translocation to prevent neurodegeneration. This Homo sapiens (Human) protein is Glutathione S-transferase P.